The primary structure comprises 196 residues: Probable malonic semialdehyde reductase RutE (196 aa).

It belongs to the nitroreductase family. HadB/RutE subfamily. The cofactor is FMN.

The catalysed reaction is 3-hydroxypropanoate + NADP(+) = 3-oxopropanoate + NADPH + H(+). May reduce toxic product malonic semialdehyde to 3-hydroxypropionic acid, which is excreted. This Shigella flexneri serotype 5b (strain 8401) protein is Probable malonic semialdehyde reductase RutE.